The following is a 709-amino-acid chain: ATP-dependent RNA helicase dbp7 (709 aa).

The tract at residues 13–90 (DNAQSRKPEA…KPAHELKGNK (78 aa)) is disordered. Residues 16-34 (QSRKPEALKSSRRWTDRAR) show a composition bias toward basic and acidic residues. The segment covering 44–65 (NESSKSTVKRNSGTNGASTDYK) has biased composition (polar residues). The span at 66–90 (NSQKEKVINPVFDPRKPAHELKGNK) shows a compositional bias: basic and acidic residues. The short motif at 138-167 (TNFAGVQLDTQLADHLNNKMNISAPTAIQS) is the Q motif element. In terms of domain architecture, Helicase ATP-binding spans 172-366 (ALLNTDDKDA…DSALKDALYL (195 aa)). 185-192 (AQTGSGKT) contributes to the ATP binding site. Residues 301–304 (DEGD) carry the DEAD box motif. A Helicase C-terminal domain is found at 404 to 580 (LLRSHVRSYK…EQPNGPSGLL (177 aa)). Residues 662 to 690 (GKISGANSSKPRKQGGSVDKGKSKSSKDI) are disordered.

Belongs to the DEAD box helicase family. DDX31/DBP7 subfamily.

The protein localises to the nucleus. The protein resides in the nucleolus. It carries out the reaction ATP + H2O = ADP + phosphate + H(+). ATP-binding RNA helicase involved in the biogenesis of 60S ribosomal subunits and is required for the normal formation of 25S and 5.8S rRNAs. The sequence is that of ATP-dependent RNA helicase dbp7 (dbp7) from Schizosaccharomyces pombe (strain 972 / ATCC 24843) (Fission yeast).